The chain runs to 274 residues: Mitochondrial outer membrane protein porin 3 (274 aa).

A Phosphoserine modification is found at S76.

This sequence belongs to the eukaryotic mitochondrial porin (TC 1.B.8.1) family. As to quaternary structure, interacts with KIN14F/KP1. Interacts with FBA6 and GAPC1. In terms of tissue distribution, expressed in leaf tips, anthers and stigma.

The protein localises to the cell membrane. It localises to the mitochondrion outer membrane. In terms of biological role, forms a channel through the mitochondrial outer membrane that allows diffusion of small hydrophilic molecules. The channel adopts an open conformation at low or zero membrane potential and a closed conformation at potentials above 30-40 mV. The open state has a weak anion selectivity whereas the closed state is cation-selective. The sequence is that of Mitochondrial outer membrane protein porin 3 (VDAC3) from Arabidopsis thaliana (Mouse-ear cress).